A 654-amino-acid polypeptide reads, in one-letter code: DNA-directed RNA polymerase III subunit RPC3 (654 aa).

The residue at position 27 (threonine 27) is a Phosphothreonine. Disordered stretches follow at residues 381–401 and 422–448; these read LSRK…ASLP and KSLQ…EDPH. Residues serine 392 and serine 394 each carry the phosphoserine modification. The segment covering 429 to 444 has biased composition (acidic residues); the sequence is DTQEEDEEEEDLDADT. Residues 581-602 form a leucine-zipper region; sequence LEWNMANLLFKKEKLKQENSTL.

The protein belongs to the eukaryotic RPC3/POLR3C RNA polymerase subunit family. As to quaternary structure, component of the RNA polymerase III (Pol III) complex consisting of 17 subunits.

The protein localises to the cytoplasm. It is found in the nucleus. Its function is as follows. DNA-dependent RNA polymerase catalyzes the transcription of DNA into RNA using the four ribonucleoside triphosphates as substrates. Specific core component of RNA polymerase III which synthesizes small RNAs, such as 5S rRNA and tRNAs. The polypeptide is DNA-directed RNA polymerase III subunit RPC3 (RPC82) (Saccharomyces cerevisiae (strain ATCC 204508 / S288c) (Baker's yeast)).